Consider the following 191-residue polypeptide: Small ribosomal subunit protein uS5 (191 aa).

The S5 DRBM domain occupies 21 to 84 (FADRLVAINR…EQAKRQMIRV (64 aa)). The tract at residues 155 to 191 (LRKESSPRSVAQRRGKKVADILPKVDAAPAPAETAEA) is disordered. Residues 181 to 191 (AAPAPAETAEA) show a composition bias toward low complexity.

The protein belongs to the universal ribosomal protein uS5 family. In terms of assembly, part of the 30S ribosomal subunit. Contacts proteins S4 and S8.

With S4 and S12 plays an important role in translational accuracy. In terms of biological role, located at the back of the 30S subunit body where it stabilizes the conformation of the head with respect to the body. The polypeptide is Small ribosomal subunit protein uS5 (Roseobacter denitrificans (strain ATCC 33942 / OCh 114) (Erythrobacter sp. (strain OCh 114))).